We begin with the raw amino-acid sequence, 78 residues long: Acyl carrier protein (78 aa).

One can recognise a Carrier domain in the interval 2-77 (STIEERVKKI…AAIDYINGHQ (76 aa)). The residue at position 37 (Ser37) is an O-(pantetheine 4'-phosphoryl)serine.

This sequence belongs to the acyl carrier protein (ACP) family. In terms of processing, 4'-phosphopantetheine is transferred from CoA to a specific serine of apo-ACP by AcpS. This modification is essential for activity because fatty acids are bound in thioester linkage to the sulfhydryl of the prosthetic group.

The protein resides in the cytoplasm. It functions in the pathway lipid metabolism; fatty acid biosynthesis. Functionally, carrier of the growing fatty acid chain in fatty acid biosynthesis. This chain is Acyl carrier protein, found in Shigella flexneri.